A 145-amino-acid polypeptide reads, in one-letter code: Protein cornichon homolog 1 (145 aa).

3 helical membrane-spanning segments follow: residues 5–25 (FAAF…FFAI), 57–77 (IIHG…SILA), and 116–136 (LRIS…YLYA).

The protein belongs to the cornichon family. In terms of assembly, interacts with glr-1. In terms of tissue distribution, widely expressed in the nervous system including in the AVA interneurons.

It localises to the endoplasmic reticulum membrane. Its subcellular location is the synapse. The protein localises to the cell projection. It is found in the dendrite. Its function is as follows. Negatively regulates export of glr-1 from the endoplasmic reticulum to synapses. This chain is Protein cornichon homolog 1, found in Caenorhabditis elegans.